We begin with the raw amino-acid sequence, 339 residues long: UDP-galactose transporter homolog 1 (339 aa).

Residues 1–4 are Lumenal-facing; it reads MAGS. Residues 5-25 traverse the membrane as a helical segment; the sequence is TSSLVICAIGIYATFLTWALV. Residues 26-42 lie on the Cytoplasmic side of the membrane; sequence QEPLATRTWPNSMGKFQ. A helical membrane pass occupies residues 43 to 63; sequence FPNVISLIQASVAMMMGYLYL. The Lumenal portion of the chain corresponds to 64-106; it reads NWKKVEYPPRKMIKDHWKQLMLISFTQSSSGPLATTSLKHVDY. Residues 107-127 traverse the membrane as a helical segment; the sequence is LTYMLAKSCKMIPVLLVHLLL. The Cytoplasmic segment spans residues 128–136; that stretch reads YRTPIASQK. The helical transmembrane segment at 137–157 threads the bilayer; it reads KVVALLVSLGVTIFTIGGNDG. The Lumenal segment spans residues 158–174; that stretch reads KKLKRSFNESGNDNKLQ. Residue asparagine 165 is glycosylated (N-linked (GlcNAc...) asparagine). Residues 175–192 traverse the membrane as a helical segment; that stretch reads GFGLLFSSLFLDGLTNAT. At 193–214 the chain is on the cytoplasmic side; sequence QDKLLKANKAKEKGKQTLITGA. A helical transmembrane segment spans residues 215 to 235; it reads HLMFTLNLFVILWNILYFIVI. Over 236-245 the chain is Lumenal; the sequence is DCKQWDNAVS. Residues 246–266 form a helical membrane-spanning segment; it reads VLTMDPQVWGYLMLYSFCGAM. Residues 267–280 are Cytoplasmic-facing; the sequence is GQCFIFYTLEQFGS. A helical transmembrane segment spans residues 281-303; that stretch reads LVLIMITVTRKMVSMILSIIVFG. Residues 304 to 307 lie on the Lumenal side of the membrane; it reads KSVR. The helical transmembrane segment at 308–327 threads the bilayer; that stretch reads FQQWVGMFIVFGGITWEALN. The Cytoplasmic segment spans residues 328 to 339; that stretch reads KKKANIPKAKSA.

This sequence belongs to the nucleotide-sugar transporter family. SLC35B subfamily.

Its subcellular location is the endoplasmic reticulum membrane. May be involved in specific transport of UDP-Gal from the cytosol to the Golgi lumen. Involved in the maintenance of optimal conditions for the folding of secretory pathway proteins in the endoplasmic reticulum. Overexpression confers resistance to the immunosuppressive drug, leflunomide. The polypeptide is UDP-galactose transporter homolog 1 (HUT1) (Saccharomyces cerevisiae (strain ATCC 204508 / S288c) (Baker's yeast)).